The sequence spans 191 residues: Thymidine kinase (191 aa).

Residues 9 to 16 (GSMNSGKT) and 85 to 88 (DESQ) contribute to the ATP site. The active-site Proton acceptor is glutamate 86. Zn(2+) contacts are provided by cysteine 143, cysteine 146, cysteine 181, and cysteine 184.

Belongs to the thymidine kinase family. As to quaternary structure, homotetramer.

Its subcellular location is the cytoplasm. The catalysed reaction is thymidine + ATP = dTMP + ADP + H(+). This is Thymidine kinase from Listeria innocua serovar 6a (strain ATCC BAA-680 / CLIP 11262).